The primary structure comprises 319 residues: Glutathione synthetase (319 aa).

One can recognise an ATP-grasp domain in the interval 127–311; that stretch reads KIFVTEFADL…VASLLWDAIE (185 aa). Residue 153 to 209 participates in ATP binding; sequence RNEMGDIILKPLYGNGGAGVFHSARDDRNFSSLLEMFGQMFREPYIAQEYLPDVRKG. Residues glutamate 282 and asparagine 284 each contribute to the Mg(2+) site.

This sequence belongs to the prokaryotic GSH synthase family. It depends on Mg(2+) as a cofactor. The cofactor is Mn(2+).

It catalyses the reaction gamma-L-glutamyl-L-cysteine + glycine + ATP = glutathione + ADP + phosphate + H(+). It functions in the pathway sulfur metabolism; glutathione biosynthesis; glutathione from L-cysteine and L-glutamate: step 2/2. The chain is Glutathione synthetase from Agrobacterium fabrum (strain C58 / ATCC 33970) (Agrobacterium tumefaciens (strain C58)).